The following is a 456-amino-acid chain: Phosphomethylpyrimidine synthase (456 aa).

Substrate is bound by residues asparagine 80, methionine 109, tyrosine 139, histidine 175, 195–197 (SRG), 236–239 (DSLR), and glutamate 275. Zn(2+) is bound at residue histidine 279. Residue tyrosine 302 coordinates substrate. Histidine 343 contacts Zn(2+). Residues cysteine 423, cysteine 426, and cysteine 431 each contribute to the [4Fe-4S] cluster site.

This sequence belongs to the ThiC family. [4Fe-4S] cluster serves as cofactor.

It catalyses the reaction 5-amino-1-(5-phospho-beta-D-ribosyl)imidazole + S-adenosyl-L-methionine = 4-amino-2-methyl-5-(phosphooxymethyl)pyrimidine + CO + 5'-deoxyadenosine + formate + L-methionine + 3 H(+). It participates in cofactor biosynthesis; thiamine diphosphate biosynthesis. Functionally, catalyzes the synthesis of the hydroxymethylpyrimidine phosphate (HMP-P) moiety of thiamine from aminoimidazole ribotide (AIR) in a radical S-adenosyl-L-methionine (SAM)-dependent reaction. This chain is Phosphomethylpyrimidine synthase, found in Prochlorococcus marinus subsp. pastoris (strain CCMP1986 / NIES-2087 / MED4).